Reading from the N-terminus, the 608-residue chain is Protein UL27 (608 aa).

The segment covering 1–13 has biased composition (pro residues); the sequence is MNPVDQPPPPLPT. The interval 1–33 is disordered; the sequence is MNPVDQPPPPLPTQQPEEQAKEDHDDGDERLFR. Basic and acidic residues predominate over residues 18 to 33; it reads EQAKEDHDDGDERLFR.

Belongs to the herpesviridae U4 family. In terms of assembly, interacts with host KAT5, PSME3 and EP400.

The protein resides in the host nucleus. It is found in the host nucleolus. Its function is as follows. Promotes a cell cycle arrest in G0/G1 by inducing the proteasomal degradation of host histone acetyltransferase KAT5/Tip60. The chain is Protein UL27 (UL27) from Human cytomegalovirus (strain AD169) (HHV-5).